Consider the following 803-residue polypeptide: Na(+)/H(+) antiporter subunit A1 (803 aa).

19 helical membrane passes run 1–21 (MSLL…IPIL), 30–50 (LGWF…SLIS), 79–99 (LSIL…LYSI), 117–137 (LFMG…LYLF), 166–186 (LIIT…ISLA), 208–228 (FIFA…QVPF), 265–285 (LFAI…ITLF), 300–320 (ILAF…GIGA), 337–357 (FTAA…LFMI), 377–397 (LTIM…MAGI), 427–447 (LGIV…VYSI), 472–492 (ILML…GLFP), 522–542 (GITP…LLLL), 591–611 (LVII…SVPF), 621–641 (IHIY…MVVI), 646–666 (LFSV…FVFF), 671–691 (LALT…LCFY), 707–727 (LTNA…GLIA), and 764–784 (MDTL…YTMI).

The protein belongs to the CPA3 antiporters (TC 2.A.63) subunit A family. May form a heterooligomeric complex that consists of seven subunits: mnhA1, mnhB1, mnhC1, mnhD1, mnhE1, mnhF1 and mnhG1.

It localises to the cell membrane. Functionally, mnh complex is a Na(+)/H(+) antiporter involved in Na(+) excretion. This is Na(+)/H(+) antiporter subunit A1 (mnhA1) from Staphylococcus haemolyticus (strain JCSC1435).